The primary structure comprises 404 residues: Photosynthetic reaction center cytochrome c subunit (404 aa).

The first 22 residues, 1–22, serve as a signal peptide directing secretion; that stretch reads MSPAQQLTLPAVIVVASVMLLG. Residue C23 is the site of N-palmitoyl cysteine attachment. C23 is lipidated: S-diacylglycerol cysteine. Heme is bound by residues M94, C107, C110, H111, M130, H144, C152, C155, H156, M236, C247, C250, H251, C307, C310, and H311. The segment at 346-404 is disordered; sequence ASEAAPAAATEAAPEAPAQEVPAAEAVPAAAEPGAAEAAGSVEPAPVEEVAPAPAAQRL.

Component of the photosynthetic reaction center composed of protein subunits L (PufL), M (PufM), H (PuhA) and cytochrome C (PufC). The reaction center interacts with light-harvesting antenna complex LH1. In terms of processing, binds 4 heme groups per subunit.

Its subcellular location is the cellular chromatophore membrane. Its function is as follows. The reaction center of purple bacteria contains a tightly bound cytochrome molecule which re-reduces the photo oxidized primary electron donor. The chain is Photosynthetic reaction center cytochrome c subunit from Thermochromatium tepidum (Chromatium tepidum).